A 259-amino-acid chain; its full sequence is Diaminopimelate epimerase (259 aa).

Asparagine 14, glutamine 42, and asparagine 60 together coordinate substrate. Catalysis depends on cysteine 69, which acts as the Proton donor. Substrate is bound by residues 70–71 (GN), asparagine 151, asparagine 184, and 202–203 (ER). Residue cysteine 211 is the Proton acceptor of the active site. 212–213 (GS) contributes to the substrate binding site.

The protein belongs to the diaminopimelate epimerase family. In terms of assembly, homodimer.

It is found in the cytoplasm. It carries out the reaction (2S,6S)-2,6-diaminopimelate = meso-2,6-diaminopimelate. It participates in amino-acid biosynthesis; L-lysine biosynthesis via DAP pathway; DL-2,6-diaminopimelate from LL-2,6-diaminopimelate: step 1/1. In terms of biological role, catalyzes the stereoinversion of LL-2,6-diaminopimelate (L,L-DAP) to meso-diaminopimelate (meso-DAP), a precursor of L-lysine and an essential component of the bacterial peptidoglycan. In Wolbachia sp. subsp. Brugia malayi (strain TRS), this protein is Diaminopimelate epimerase.